Consider the following 389-residue polypeptide: Mitochondrial tRNA-specific 2-thiouridylase 1 (389 aa).

ATP is bound by residues 8 to 15 and methionine 34; that span reads GVSGGVDS. Residues 94 to 96 form an interaction with target base in tRNA region; the sequence is NPD. Cysteine 99 serves as the catalytic Nucleophile. Cysteine 99 and cysteine 205 form a disulfide bridge. Residue glycine 124 participates in ATP binding. The tract at residues 154-156 is interaction with tRNA; the sequence is KDQ. The Cysteine persulfide intermediate role is filled by cysteine 205. Positions 317-318 are interaction with tRNA; that stretch reads QH.

This sequence belongs to the MnmA/TRMU family.

It localises to the mitochondrion. It catalyses the reaction 5-taurinomethyluridine(34) in tRNA + S-sulfanyl-L-cysteinyl-[protein] + AH2 + ATP = 5-taurinomethyl-2-thiouridine(34) in tRNA + L-cysteinyl-[protein] + A + AMP + diphosphate + H(+). Catalyzes the 2-thiolation of uridine at the wobble position (U34) of mitochondrial tRNA(Lys), tRNA(Glu) and tRNA(Gln). Required for the formation of 5-taurinomethyl-2-thiouridine (tm5s2U) of mitochondrial tRNA(Lys), tRNA(Glu), and tRNA(Gln) at the wobble position. ATP is required to activate the C2 atom of the wobble base. The sequence is that of Mitochondrial tRNA-specific 2-thiouridylase 1 from Drosophila melanogaster (Fruit fly).